The following is a 147-amino-acid chain: Large ribosomal subunit protein uL13 (147 aa).

Belongs to the universal ribosomal protein uL13 family. In terms of assembly, part of the 50S ribosomal subunit.

In terms of biological role, this protein is one of the early assembly proteins of the 50S ribosomal subunit, although it is not seen to bind rRNA by itself. It is important during the early stages of 50S assembly. In Leuconostoc citreum (strain KM20), this protein is Large ribosomal subunit protein uL13.